The primary structure comprises 249 residues: 5'-nucleotidase SurE (249 aa).

A divalent metal cation contacts are provided by aspartate 9, aspartate 10, serine 40, and asparagine 92.

The protein belongs to the SurE nucleotidase family. It depends on a divalent metal cation as a cofactor.

Its subcellular location is the cytoplasm. The catalysed reaction is a ribonucleoside 5'-phosphate + H2O = a ribonucleoside + phosphate. Nucleotidase that shows phosphatase activity on nucleoside 5'-monophosphates. This Shewanella loihica (strain ATCC BAA-1088 / PV-4) protein is 5'-nucleotidase SurE.